We begin with the raw amino-acid sequence, 217 residues long: Thymidylate kinase (217 aa).

7-14 (GIDGAGKS) contributes to the ATP binding site.

This sequence belongs to the thymidylate kinase family.

It carries out the reaction dTMP + ATP = dTDP + ADP. Phosphorylation of dTMP to form dTDP in both de novo and salvage pathways of dTTP synthesis. This is Thymidylate kinase from Chlorobaculum parvum (strain DSM 263 / NCIMB 8327) (Chlorobium vibrioforme subsp. thiosulfatophilum).